A 213-amino-acid polypeptide reads, in one-letter code: ATP-dependent dethiobiotin synthetase BioD (213 aa).

12–17 (NVGKTF) contacts ATP. Thr-16 is a binding site for Mg(2+). Lys-36 is an active-site residue. Ser-40 is a substrate binding site. Residues Asp-53, 110–113 (EGTG), and 170–171 (NQ) each bind ATP. Mg(2+) contacts are provided by Asp-53 and Glu-110.

It belongs to the dethiobiotin synthetase family. In terms of assembly, homodimer. Mg(2+) is required as a cofactor.

Its subcellular location is the cytoplasm. The catalysed reaction is (7R,8S)-7,8-diammoniononanoate + CO2 + ATP = (4R,5S)-dethiobiotin + ADP + phosphate + 3 H(+). It participates in cofactor biosynthesis; biotin biosynthesis; biotin from 7,8-diaminononanoate: step 1/2. Functionally, catalyzes a mechanistically unusual reaction, the ATP-dependent insertion of CO2 between the N7 and N8 nitrogen atoms of 7,8-diaminopelargonic acid (DAPA, also called 7,8-diammoniononanoate) to form a ureido ring. This Ruthia magnifica subsp. Calyptogena magnifica protein is ATP-dependent dethiobiotin synthetase BioD.